Reading from the N-terminus, the 1325-residue chain is Lysine-specific demethylase 3A (1325 aa).

3 disordered regions span residues 249–284 (SKRI…QGHV), 300–333 (PANK…RRSV), and 372–399 (QNGK…TGLK). The span at 274 to 283 (SPEVSQSQGH) shows a compositional bias: polar residues. Low complexity predominate over residues 378–390 (SLISSRSSSLSDS). The segment at 669-694 (CDVCDTTIFNLRWVCSKCGFGVCVDC) adopts a C6-type zinc-finger fold. 2 disordered regions span residues 772 to 791 (TLKE…SLQQ) and 798 to 819 (PQLP…TASV). Residues 888 to 892 (LRNLL) carry the LXXLL motif motif. Positions 1062–1285 (MPSRFDDLMK…HCFWLTQEFR (224 aa)) constitute a JmjC domain. 3 residues coordinate Fe cation: His1124, Asp1126, and His1253.

It belongs to the JHDM2 histone demethylase family. It depends on Fe(2+) as a cofactor.

It localises to the cytoplasm. It is found in the nucleus. It carries out the reaction N(6),N(6)-dimethyl-L-lysyl(9)-[histone H3] + 2 2-oxoglutarate + 2 O2 = L-lysyl(9)-[histone H3] + 2 formaldehyde + 2 succinate + 2 CO2. Histone demethylase that specifically demethylates 'Lys-9' of histone H3, thereby playing a central role in histone code. Preferentially demethylates mono- and dimethylated H3 'Lys-9' residue, with a preference for dimethylated residue, while it has weak or no activity on trimethylated H3 'Lys-9'. Demethylation of Lys residue generates formaldehyde and succinate. This chain is Lysine-specific demethylase 3A (KDM3A), found in Gallus gallus (Chicken).